A 608-amino-acid chain; its full sequence is MRHLKLTGFIFFLLPLTESLALPTKPQDVDHFNATQKFIDENTTYLAIIAFSQYVQEASFDEVETLVKVMLDYRDRCWADNTLPECSKTANDAIQDMLCDMEGLPQKHNFSHCCGKAGFPRRLCFFYNKKANVGFLPPFPTLDPEEKCQAYKNNSESFLHLYMYEVARRNPFVFAPVLLAVAAWFEEAATTCCEQQQKATCFQAKAAPITQYLKASSSYQRNVCGALIKFGPKVLNSINVAVFSKKFPKIGFKDLTTLLEDVSSMYEGCCEGDVVHCIRSQSQVVNHICSKQDSISSKIKVCCEKKTLEREACIINANKDDRPEGLSLREAKFTESENVCQERDSDPDKFFAEFIYEYSRRHPDLSTPELLRITKVYMDFLEDCCSRENPAGCYRHVEDKFNETTQRSLAMVQQECKQFQELGKDTLQRHFLVKFTKAAPQLPMEELVSLSKEMVAALTTCCTLSDEFACVDNLADLVLGELCGVNTNRTINPAVDHCCKTDFAFRRHCFEHLKADTTYELPSVSALVSALHTDWCQPRKEDLQNKKHRFLVNLVKWMPGITDEEWLCLFTKFTAAREECSEVQEPESCFSPESSKTGDESQATEKQR.

A signal peptide spans 1-21 (MRHLKLTGFIFFLLPLTESLA). Albumin domains follow at residues 22–210 (LPTK…APIT), 211–403 (QYLK…KFNE), and 404–599 (TTQR…KTGD). Asn33 carries N-linked (GlcNAc...) asparagine glycosylation. Intrachain disulfides connect Cys77–Cys86, Cys99–Cys114, Cys113–Cys124, Cys148–Cys193, Cys192–Cys201, Cys224–Cys270, Cys269–Cys277, Cys289–Cys303, Cys302–Cys313, Cys340–Cys385, and Cys384–Cys393. Residue Asn109 is glycosylated (N-linked (GlcNAc...) asparagine). A glycan (N-linked (GlcNAc...) asparagine) is linked at Asn153. The interval 215-319 (ASSSYQRNVC…REACIINANK (105 aa)) is binding pocket for hydrophobic ligands. N-linked (GlcNAc...) asparagine glycosylation is present at Asn402. Cystine bridges form between Cys416-Cys462, Cys461-Cys470, Cys483-Cys499, Cys498-Cys509, and Cys580-Cys589. The N-linked (GlcNAc...) asparagine glycan is linked to Asn488. The interval 583–608 (VQEPESCFSPESSKTGDESQATEKQR) is disordered. The span at 596–608 (KTGDESQATEKQR) shows a compositional bias: basic and acidic residues.

This sequence belongs to the ALB/AFP/VDB family. As to quaternary structure, forms a 1:1 complex with Wnt family members; interacts with WNT1, WNT2B, WNT3, WNT5A, WNT7A, WNT7B, WNT8, WNT9A, WNT9B, WNT10A and WNT10B. Interacts with WNT3A. In terms of processing, N-glycosylated; more than 90% of the glycans are sialylated. In terms of tissue distribution, detected in brain, especially on brain capillaries (at protein level). Expressed in isolated brain capillaries.

It localises to the secreted. In terms of biological role, functions as a carrier for hydrophobic molecules in body fluids. Essential for the solubility and activity of lipidated Wnt family members, including WNT1, WNT2B, WNT3, WNT3A, WNT5A, WNT7A, WNT7B, WNT8, WNT9A, WNT9B, WNT10A and WNT10B. Binds vitamin E. May transport vitamin E in body fluids under conditions where the lipoprotein system is not sufficient. May be involved in the transport of vitamin E across the blood-brain barrier. This is Afamin (Afm) from Mus musculus (Mouse).